We begin with the raw amino-acid sequence, 245 residues long: 1-(5-phosphoribosyl)-5-[(5-phosphoribosylamino)methylideneamino] imidazole-4-carboxamide isomerase (245 aa).

Residue Asp7 is the Proton acceptor of the active site. The active-site Proton donor is Asp129.

It belongs to the HisA/HisF family.

The protein resides in the cytoplasm. The enzyme catalyses 1-(5-phospho-beta-D-ribosyl)-5-[(5-phospho-beta-D-ribosylamino)methylideneamino]imidazole-4-carboxamide = 5-[(5-phospho-1-deoxy-D-ribulos-1-ylimino)methylamino]-1-(5-phospho-beta-D-ribosyl)imidazole-4-carboxamide. Its pathway is amino-acid biosynthesis; L-histidine biosynthesis; L-histidine from 5-phospho-alpha-D-ribose 1-diphosphate: step 4/9. This Shigella boydii serotype 18 (strain CDC 3083-94 / BS512) protein is 1-(5-phosphoribosyl)-5-[(5-phosphoribosylamino)methylideneamino] imidazole-4-carboxamide isomerase.